The primary structure comprises 466 residues: Cysteine--tRNA ligase 1 (466 aa).

C27 lines the Zn(2+) pocket. The 'HIGH' region motif lies at 29–39 (PTVQSPPHIGH). Zn(2+)-binding residues include C211, H236, and E240. A 'KMSKS' region motif is present at residues 267 to 271 (KMSKS). An ATP-binding site is contributed by K270.

It belongs to the class-I aminoacyl-tRNA synthetase family. In terms of assembly, monomer. The cofactor is Zn(2+).

It localises to the cytoplasm. The enzyme catalyses tRNA(Cys) + L-cysteine + ATP = L-cysteinyl-tRNA(Cys) + AMP + diphosphate. The sequence is that of Cysteine--tRNA ligase 1 from Tropheryma whipplei (strain TW08/27) (Whipple's bacillus).